Consider the following 295-residue polypeptide: Probable deoxyhypusine synthase (295 aa).

The active-site Nucleophile is Lys267.

Belongs to the deoxyhypusine synthase family. It depends on NAD(+) as a cofactor.

It catalyses the reaction [eIF5A protein]-L-lysine + spermidine = [eIF5A protein]-deoxyhypusine + propane-1,3-diamine. It functions in the pathway protein modification; eIF5A hypusination. Catalyzes the NAD-dependent oxidative cleavage of spermidine and the subsequent transfer of the butylamine moiety of spermidine to the epsilon-amino group of a specific lysine residue of the eIF-5A precursor protein to form the intermediate deoxyhypusine residue. The sequence is that of Probable deoxyhypusine synthase from Pyrobaculum calidifontis (strain DSM 21063 / JCM 11548 / VA1).